We begin with the raw amino-acid sequence, 223 residues long: Deoxyribose-phosphate aldolase (223 aa).

Residue Asp-91 is the Proton donor/acceptor of the active site. Lys-153 serves as the catalytic Schiff-base intermediate with acetaldehyde. The active-site Proton donor/acceptor is the Lys-182.

This sequence belongs to the DeoC/FbaB aldolase family. DeoC type 1 subfamily.

It is found in the cytoplasm. It carries out the reaction 2-deoxy-D-ribose 5-phosphate = D-glyceraldehyde 3-phosphate + acetaldehyde. The protein operates within carbohydrate degradation; 2-deoxy-D-ribose 1-phosphate degradation; D-glyceraldehyde 3-phosphate and acetaldehyde from 2-deoxy-alpha-D-ribose 1-phosphate: step 2/2. In terms of biological role, catalyzes a reversible aldol reaction between acetaldehyde and D-glyceraldehyde 3-phosphate to generate 2-deoxy-D-ribose 5-phosphate. In Yersinia pseudotuberculosis serotype O:1b (strain IP 31758), this protein is Deoxyribose-phosphate aldolase.